Consider the following 6199-residue polypeptide: Adhesion G-protein coupled receptor V1 (6199 aa).

The signal sequence occupies residues 1 to 23 (MPAVLALSGLLLMLLTVSVRSES). Calx-beta domains lie at 24–109 (AELR…VFIL), 126–230 (ATIT…VQLT), 249–355 (ISRN…QVVL), 380–480 (DKPY…LKLI), 637–737 (PDIA…ILTL), 753–853 (SREI…VVLS), 869–972 (NITV…ITLL), 997–1083 (IYFA…YIVL), 1099–1199 (TVVI…LRLM), 1434–1534 (PIPG…FYLQ), 1563–1655 (GLFS…RVRL), 1835–1937 (IIVT…VRLT), 1963–2063 (LFVF…FLEL), 2092–2190 (QVII…RIEL), 2208–2308 (ITIL…KVEL), 2425–2525 (AAFC…FIIK), 2582–2659 (VREE…QIGL), 2673–2773 (DTVT…RVIL), 2814–2908 (PSSL…LVNI), 2931–3029 (EIII…QLIL), and 3054–3154 (GHGI…TVTL). Residues 24–5803 (AELRFQGQTQ…IESLASFNEA (5780 aa)) are Extracellular-facing. EAR repeat units follow at residues 3239–3284 (VLAV…KWQG), 3285–3333 (VFVP…RVQA), 3336–3372 (NLTL…VWNR), 3374–3420 (SFFL…QWTD), 3422–3467 (RFQN…LWGS), and 3471–3513 (VFQQ…SWRS). Calx-beta domains lie at 3562-3605 (SNQS…RVSL), 3619-3719 (QVTF…TIVL), 3778-3854 (ITLS…FVNI), 3916-3985 (VLRL…MVKL), 4000-4103 (VVVS…IQLL), 4120-4220 (VVIR…QLRL), 4247-4335 (HGLF…FLNI), 4371-4471 (VIIQ…LQLT), 4493-4593 (DSPN…IIML), 4615-4715 (KFGD…TLRL), 4993-5076 (QHLV…VNLT), 5125-5225 (SEDS…IYLS), and 5260-5360 (VGFS…LVEV). The GAIN-B domain maps to 5636 to 5801 (PYFTIAAHHW…AEIESLASFN (166 aa)). Intrachain disulfides connect C5751–C5780 and C5768–C5782. Residues 5751 to 5801 (CLLWNQAAESWLSDGQFCRLVDDTQNYVECACSHLSIYTAYAEIESLASFN) form a GPS region. The helical transmembrane segment at 5804–5824 (FYAAGFICISGFALAMVSHLM) threads the bilayer. At 5825–5834 (CARFLMFAAK) the chain is on the cytoplasmic side. Residues 5835–5855 (LLTHMMVACLGTQICFLVSAF) form a helical membrane-spanning segment. Over 5856 to 5864 (RGRMFSEDS) the chain is Extracellular. The helical transmembrane segment at 5865-5885 (CAALGLFFHYFHLSQFGWMLV) threads the bilayer. At 5886-5908 (QAINFWQILVMNDEHTERRYLLY) the chain is on the cytoplasmic side. A helical membrane pass occupies residues 5909 to 5929 (FLLSWGLPALVIIVLVVVLLG). Residues 5930 to 5954 (GFGWSIHSVYGLVQGDLCFIPNVYA) lie on the Extracellular side of the membrane. A helical transmembrane segment spans residues 5955-5975 (ALCTAALVPLICLVGVLVIFI). Residues 5976–6001 (HAYQVTQQWKAYDDIYRGRTNSSEVP) lie on the Cytoplasmic side of the membrane. Residues 6002 to 6022 (MMLYLFALVTLVCVWAGLHMA) form a helical membrane-spanning segment. The Extracellular portion of the chain corresponds to 6023–6025 (YRY). The helical transmembrane segment at 6026–6046 (IWMLILLVIFNIFLGLYVFSV) threads the bilayer. Residues 6047 to 6199 (YFVMHNQLFW…RRIPIADTHL (153 aa)) are Cytoplasmic-facing.

Belongs to the G-protein coupled receptor 2 family. Adhesion G-protein coupled receptor (ADGR) subfamily. As to quaternary structure, heterodimer of 2 chains generated by proteolytic processing; the large extracellular N-terminal fragment and the membrane-bound C-terminal fragment predominantly remain associated and non-covalently linked. Autoproteolytically processed at the GPS region of the GAIN-B domain; this cleavage modulates receptor activity.

The protein localises to the cell membrane. Its subcellular location is the cell projection. It localises to the stereocilium membrane. It is found in the photoreceptor inner segment. In terms of biological role, receptor that may have an important role in the development of the sensory nervous system. The sequence is that of Adhesion G-protein coupled receptor V1 (adgrv1) from Danio rerio (Zebrafish).